The following is a 176-amino-acid chain: NAD(P)H-quinone oxidoreductase subunit 6, chloroplastic (176 aa).

Helical transmembrane passes span 10–30 (FLLVFLGSGLIVGGLGVVLLP), 33–53 (IFSAFSLGFVLVCISLLYILA), 61–81 (AQLLIYVGAINVLIIFAVMFM), 92–112 (LWTVGDGITSLVCTTLLFSLI), and 152–172 (FFLPFELISIILLVALIGAIS).

Belongs to the complex I subunit 6 family. In terms of assembly, NDH is composed of at least 16 different subunits, 5 of which are encoded in the nucleus.

Its subcellular location is the plastid. It is found in the chloroplast thylakoid membrane. It catalyses the reaction a plastoquinone + NADH + (n+1) H(+)(in) = a plastoquinol + NAD(+) + n H(+)(out). The catalysed reaction is a plastoquinone + NADPH + (n+1) H(+)(in) = a plastoquinol + NADP(+) + n H(+)(out). Functionally, NDH shuttles electrons from NAD(P)H:plastoquinone, via FMN and iron-sulfur (Fe-S) centers, to quinones in the photosynthetic chain and possibly in a chloroplast respiratory chain. The immediate electron acceptor for the enzyme in this species is believed to be plastoquinone. Couples the redox reaction to proton translocation, and thus conserves the redox energy in a proton gradient. The chain is NAD(P)H-quinone oxidoreductase subunit 6, chloroplastic (ndhG) from Arabis hirsuta (Hairy rock-cress).